Consider the following 96-residue polypeptide: Co-chaperonin GroES (96 aa).

It belongs to the GroES chaperonin family. As to quaternary structure, heptamer of 7 subunits arranged in a ring. Interacts with the chaperonin GroEL.

It is found in the cytoplasm. Together with the chaperonin GroEL, plays an essential role in assisting protein folding. The GroEL-GroES system forms a nano-cage that allows encapsulation of the non-native substrate proteins and provides a physical environment optimized to promote and accelerate protein folding. GroES binds to the apical surface of the GroEL ring, thereby capping the opening of the GroEL channel. This Geotalea daltonii (strain DSM 22248 / JCM 15807 / FRC-32) (Geobacter daltonii) protein is Co-chaperonin GroES.